A 424-amino-acid polypeptide reads, in one-letter code: Imidazolonepropionase (424 aa).

The Fe(3+) site is built by H84 and H86. Residues H84 and H86 each coordinate Zn(2+). 3 residues coordinate 4-imidazolone-5-propanoate: R93, Y156, and H189. Y156 lines the N-formimidoyl-L-glutamate pocket. H254 serves as a coordination point for Fe(3+). H254 provides a ligand contact to Zn(2+). 4-imidazolone-5-propanoate is bound at residue E257. D328 contacts Fe(3+). D328 is a Zn(2+) binding site. Positions 330 and 332 each coordinate N-formimidoyl-L-glutamate. S333 is a binding site for 4-imidazolone-5-propanoate.

It belongs to the metallo-dependent hydrolases superfamily. HutI family. Zn(2+) is required as a cofactor. It depends on Fe(3+) as a cofactor.

It localises to the cytoplasm. The catalysed reaction is 4-imidazolone-5-propanoate + H2O = N-formimidoyl-L-glutamate. It functions in the pathway amino-acid degradation; L-histidine degradation into L-glutamate; N-formimidoyl-L-glutamate from L-histidine: step 3/3. Catalyzes the hydrolytic cleavage of the carbon-nitrogen bond in imidazolone-5-propanoate to yield N-formimidoyl-L-glutamate. It is the third step in the universal histidine degradation pathway. In Geobacillus kaustophilus (strain HTA426), this protein is Imidazolonepropionase.